The chain runs to 292 residues: Replication-associated protein A (292 aa).

One can recognise a CRESS-DNA virus Rep endonuclease domain in the interval 9–111 (RLQSKYVFLT…DGDIKTRGDF (103 aa)). The RCR-1 signature appears at 16–19 (FLTY). 3 residues coordinate a divalent metal cation: Glu-50, His-58, and His-60. The RCR-2 signature appears at 58-60 (HYH). The active-site For DNA cleavage activity is the Tyr-98. Residues 98 to 101 (YISK) carry the RCR-3 motif. Residue Asp-102 coordinates a divalent metal cation. The interval 160 to 172 (SANKLFPPQPEQY) is oligomerization. Residues 181-185 (LRCHE) are binding to RBR1. The interval 230 to 292 (GLGSDTPAST…PSSSSHCGSN (63 aa)) is disordered. The segment covering 255-292 (SGDTTTGTGPSTSPTTMNTPPIISSTTSPSSSSHCGSN) has biased composition (low complexity).

The protein belongs to the geminiviridae Rep protein family. As to quaternary structure, homooligomer. Interacts with host retinoblastoma-related protein 1 (RBR1), and may thereby deregulate the host cell cycle. Part of the C- and V-complexes which are RepA-Rep-DNA complexes involved in the c-sense and v-sense transcription. Mg(2+) is required as a cofactor. The cofactor is Mn(2+).

The protein localises to the host nucleus. It localises to the host cytoplasm. Implicated in enhancement of V-sense gene expression. Acts a an inhibitor of C-sense gene transcription. The protein is Replication-associated protein A of Bean yellow dwarf virus (BeYDV).